Reading from the N-terminus, the 247-residue chain is tRNA (guanine-N(1)-)-methyltransferase (247 aa).

Residues glycine 117 and 136–141 (LGDFVL) contribute to the S-adenosyl-L-methionine site.

Belongs to the RNA methyltransferase TrmD family. In terms of assembly, homodimer.

Its subcellular location is the cytoplasm. It catalyses the reaction guanosine(37) in tRNA + S-adenosyl-L-methionine = N(1)-methylguanosine(37) in tRNA + S-adenosyl-L-homocysteine + H(+). In terms of biological role, specifically methylates guanosine-37 in various tRNAs. The protein is tRNA (guanine-N(1)-)-methyltransferase of Myxococcus xanthus (strain DK1622).